Consider the following 197-residue polypeptide: Dermorphin-1 (197 aa).

The signal sequence occupies residues 1 to 20; the sequence is MSFLKKSLLLILFLGLVSLS. The propeptide occupies 21–45; that stretch reads VCKEEKRETEEENENEENHEEGSEM. Residues 24 to 197 are disordered; the sequence is EEKRETEEEN…GYPSGEAKKM (174 aa). Over residues 30–39 the composition is skewed to acidic residues; that stretch reads EEENENEENH. Residues 40 to 62 show a composition bias toward basic and acidic residues; sequence EEGSEMKRYMFHLMDGEAKKRDS. Met49 bears the D-methionine mark. The residue at position 54 (Asp54) is an Aspartic acid 1-amide. The propeptide occupies 56-77; sequence EAKKRDSEENEIEENHEEGSEM. A D-alanine (Ala) modification is found at Ala81. The residue at position 86 (Ser86) is a Serine amide. Over residues 88-97 the composition is skewed to basic and acidic residues; sequence EAKKIKRVSE. Residues 88-112 constitute a propeptide that is removed on maturation; that stretch reads EAKKIKRVSEEENENEENHEEGSEM. Residue Ala116 is modified to D-alanine (Ala). Ser121 bears the Serine amide mark. A compositionally biased stretch (basic and acidic residues) spans 123–132; sequence EAKKIKRESE. A propeptide spanning residues 123–147 is cleaved from the precursor; sequence EAKKIKRESEEEKEIEENHEEGSEM. Ala151 carries the D-alanine (Ala) modification. A Serine amide modification is found at Ser156. A propeptide spanning residues 158 to 182 is cleaved from the precursor; that stretch reads EAKKIKRESEEENENEENHEEGSEM. Over residues 167-176 the composition is skewed to acidic residues; the sequence is EEENENEENH. At Ala186 the chain carries D-alanine (Ala). At Ser191 the chain carries Serine amide. The propeptide occupies 193-197; the sequence is EAKKM.

The protein belongs to the frog skin active peptide (FSAP) family. Dermorphin subfamily. Expressed by the skin glands.

The protein resides in the secreted. In terms of biological role, dermorphin has a very potent opiate-like activity. It has high affinity and selectivity for mu-type opioid receptors. Its function is as follows. Deltorphin has a very potent opiate-like activity. It has high affinity and selectivity for delta-type opioid receptors. The chain is Dermorphin-1 from Phyllomedusa sauvagei (Sauvage's leaf frog).